We begin with the raw amino-acid sequence, 307 residues long: Coproporphyrin III ferrochelatase (307 aa).

Fe-coproporphyrin III is bound by residues Tyr-12, Arg-29, 45–46 (RY), Ser-53, and Tyr-124. Residues His-181 and Glu-263 each coordinate Fe(2+).

This sequence belongs to the ferrochelatase family.

It localises to the cytoplasm. The catalysed reaction is Fe-coproporphyrin III + 2 H(+) = coproporphyrin III + Fe(2+). Its pathway is porphyrin-containing compound metabolism; protoheme biosynthesis. Involved in coproporphyrin-dependent heme b biosynthesis. Catalyzes the insertion of ferrous iron into coproporphyrin III to form Fe-coproporphyrin III. This Staphylococcus aureus (strain MRSA252) protein is Coproporphyrin III ferrochelatase.